We begin with the raw amino-acid sequence, 901 residues long: Valine--tRNA ligase (901 aa).

The disordered stretch occupies residues 1-37 (MLPGCYTHRLNMSDTQDPPQDESTTDESADALDGEYD). The span at 19 to 35 (PQDESTTDESADALDGE) shows a compositional bias: acidic residues. Positions 72 to 82 (PTVSGNLHMGH) match the 'HIGH' region motif. Residues 572 to 576 (AMSKS) carry the 'KMSKS' region motif. Residue Lys575 participates in ATP binding.

The protein belongs to the class-I aminoacyl-tRNA synthetase family. ValS type 2 subfamily.

It localises to the cytoplasm. The catalysed reaction is tRNA(Val) + L-valine + ATP = L-valyl-tRNA(Val) + AMP + diphosphate. Its function is as follows. Catalyzes the attachment of valine to tRNA(Val). As ValRS can inadvertently accommodate and process structurally similar amino acids such as threonine, to avoid such errors, it has a 'posttransfer' editing activity that hydrolyzes mischarged Thr-tRNA(Val) in a tRNA-dependent manner. The polypeptide is Valine--tRNA ligase (Haloarcula marismortui (strain ATCC 43049 / DSM 3752 / JCM 8966 / VKM B-1809) (Halobacterium marismortui)).